The sequence spans 88 residues: Small ribosomal subunit protein uS15c (88 aa).

It belongs to the universal ribosomal protein uS15 family. As to quaternary structure, part of the 30S ribosomal subunit.

It is found in the plastid. Its subcellular location is the chloroplast. The polypeptide is Small ribosomal subunit protein uS15c (rps15) (Marchantia polymorpha (Common liverwort)).